The following is a 316-amino-acid chain: Probable cell division protein WhiA (316 aa).

The segment at residues 275 to 309 (TLKELGEMVSGGKISKSGINHRLRKIDDIAEKLRA) is a DNA-binding region (H-T-H motif).

This sequence belongs to the WhiA family.

Functionally, involved in cell division and chromosome segregation. This chain is Probable cell division protein WhiA, found in Bacillus anthracis (strain CDC 684 / NRRL 3495).